The sequence spans 172 residues: Adenine phosphoribosyltransferase (172 aa).

This sequence belongs to the purine/pyrimidine phosphoribosyltransferase family. Homodimer.

It localises to the cytoplasm. The enzyme catalyses AMP + diphosphate = 5-phospho-alpha-D-ribose 1-diphosphate + adenine. It functions in the pathway purine metabolism; AMP biosynthesis via salvage pathway; AMP from adenine: step 1/1. Its function is as follows. Catalyzes a salvage reaction resulting in the formation of AMP, that is energically less costly than de novo synthesis. The protein is Adenine phosphoribosyltransferase of Pelobacter propionicus (strain DSM 2379 / NBRC 103807 / OttBd1).